The primary structure comprises 379 residues: Armadillo repeat-containing X-linked protein 3 (379 aa).

Over 1–6 the chain is Mitochondrial intermembrane; it reads MGYARK. Mitochondrion outer membrane (MOM)-targeting sequence regions lie at residues 1-6 and 26-37; these read MGYARK and RLTRGRKQNKEK. Residues 7–29 form a helical; Signal-anchor membrane-spanning segment; sequence VGWVTAGLVIGAGACYCIYRLTR. Topologically, residues 30-379 are cytoplasmic; the sequence is GRKQNKEKMA…TERMFPKSQE (350 aa). Phosphoserine occurs at positions 61, 67, and 72. The tract at residues 89–98 is nuclear localization signal; sequence RARARARARA. Residues 95–106 are compositionally biased toward basic residues; that stretch reads RARATRARRAVQ. The segment at 95-116 is disordered; sequence RARATRARRAVQKRASPNSDDT. S110 carries the phosphoserine modification. 3 ARM repeats span residues 111–151, 153–192, and 233–272; these read PNSD…NNAA, AFNR…NLSV, and VTNE…NLAE.

The protein belongs to the eutherian X-chromosome-specific Armcx family. As to quaternary structure, interacts (via ARM domain) with MIRO1, MIRO2 and TRAK2. The interaction with Miro is calcium-dependent. Interacts with Sox10. Highly expressed in the developing neural tissues, neural crest derivatives and hind limbs. Also widely expressed in the adult nervous tissue, especially in the forebrain, including the cerebral cortex, hippocampus and thalamus.

Its subcellular location is the mitochondrion outer membrane. The protein resides in the cytoplasm. It is found in the nucleus. Its function is as follows. Regulates mitochondrial aggregation and transport in axons in living neurons. May link mitochondria to the Trak2-kinesin motor complex via its interaction with Miro and Trak2. Mitochondrial distribution and dynamics is regulated through Armcx3 protein degradation, which is promoted by PCK and negatively regulated by Wnt1. Enhances the Sox10-mediated transactivation of the neuronal acetylcholine receptor subunit alpha-3 and beta-4 subunit gene promoters. The polypeptide is Armadillo repeat-containing X-linked protein 3 (Armcx3) (Mus musculus (Mouse)).